A 101-amino-acid polypeptide reads, in one-letter code: UPF0473 protein MGAS10750_Spy1887 (101 aa).

It belongs to the UPF0473 family.

This is UPF0473 protein MGAS10750_Spy1887 from Streptococcus pyogenes serotype M4 (strain MGAS10750).